The sequence spans 377 residues: Nitric oxide reductase FlRd-NAD(+) reductase (377 aa).

Belongs to the FAD-dependent oxidoreductase family. FAD is required as a cofactor.

The protein resides in the cytoplasm. It catalyses the reaction 2 reduced [nitric oxide reductase rubredoxin domain] + NAD(+) + H(+) = 2 oxidized [nitric oxide reductase rubredoxin domain] + NADH. The protein operates within nitrogen metabolism; nitric oxide reduction. Its function is as follows. One of at least two accessory proteins for anaerobic nitric oxide (NO) reductase. Reduces the rubredoxin moiety of NO reductase. In Escherichia coli O81 (strain ED1a), this protein is Nitric oxide reductase FlRd-NAD(+) reductase.